The following is a 29-amino-acid chain: Dermaseptin-J5 (29 aa).

The residue at position 29 (Val29) is a Valine amide.

As to expression, expressed by the skin glands.

The protein resides in the secreted. In terms of biological role, has antimicrobial activity. This chain is Dermaseptin-J5, found in Phasmahyla jandaia (Jandaia leaf frog).